A 178-amino-acid chain; its full sequence is CD209 antigen-like protein C (178 aa).

Cysteine 48 and cysteine 59 are disulfide-bonded. In terms of domain architecture, C-type lectin spans 54–169; it reads VFQGNCYFFS…CTIKKYWICK (116 aa). An N-linked (GlcNAc...) asparagine glycan is attached at asparagine 70. Cystine bridges form between cysteine 76–cysteine 168 and cysteine 147–cysteine 160. Ca(2+)-binding residues include glutamate 138, asparagine 140, glutamate 145, asparagine 156, and aspartate 157.

Functionally, probable pathogen-recognition receptor. May recognize in a calcium-dependent manner high mannose N-linked oligosaccharides in a variety of pathogen antigens. The chain is CD209 antigen-like protein C (Cd209c) from Mus musculus (Mouse).